A 702-amino-acid polypeptide reads, in one-letter code: MASARVPQQLFLQGVAAVYLFAFASLYTQIPGLYGPEGILPARRTLRPQGKGRWQQLWETPTILWEAPRLGLDTAQGLDLLTLLGTVLALGALLLNSLRHPFIYLLLWAAYLSACQVGQVFLYFQWDSLLLETGFLAILVAPLRRPSKHKIPQGGLAGALPHEDLPFWLVRWLLFRLMFASGVVKLTSRCPAWWGLTALTYHYETQCLPTPAAWFAHHLPVWLHRLSVVATFLIEIAVPPLFFAPIRRLRLSAFYAQALLQILIIITGNYNFFNLLTLVLTTALLDDRHLSAEPELRCHKKMPTSWPKTLLTSLSLMLELTVYGLLAYGTIYYFGLEVDWQQQIVLSKTTFTFHQFSQWLKMVTLPTVWLGTASLAWELLIALWRWIQVQGWSRKFFAGIQLSVLGTATVFLFLISLVPYSYVEPGTHGRLWTGAHRLFSSVEHLQLANSYGLFRRMTGLGGRPEVVLEGSHDGHHWTEIEFMYKPGNVSRPPPFLIPHQPRLDWQMWFAALGPHTHSPWFTSLVLRLLQGKEPVIRLIQNQVANYPFREQPPTYLRAQRYKYWFSKPGDQSRWWHRQWVEEFFPSVSLGDPTLETLLQQFGLKDKSPPRARSSKNALAQTLNWVRAQLSPLEPSILLWGLLGAVVAIRVVRTLLTPRPLQSSKQTREEKRKQAPKKDSRAVSEQTAPNSNSNGSWAPRRKK.

10 helical membrane passes run 10–30 (LFLQ…YTQI), 75–95 (AQGL…ALLL), 102–122 (FIYL…QVFL), 123–143 (YFQW…VAPL), 164–184 (DLPF…SGVV), 226–246 (LSVV…FAPI), 259–279 (LLQI…LTLV), 316–336 (LMLE…YFGL), 363–383 (VTLP…LIAL), and 396–416 (FFAG…FLIS). An N-linked (GlcNAc...) asparagine glycan is attached at Asn488. The helical transmembrane segment at 628–648 (QLSPLEPSILLWGLLGAVVAI) threads the bilayer. Residues 660–702 (LQSSKQTREEKRKQAPKKDSRAVSEQTAPNSNSNGSWAPRRKK) are disordered. The segment covering 665–681 (QTREEKRKQAPKKDSRA) has biased composition (basic and acidic residues). Positions 682–695 (VSEQTAPNSNSNGS) are enriched in polar residues.

It belongs to the lipase maturation factor family.

It localises to the endoplasmic reticulum membrane. Involved in the maturation of specific proteins in the endoplasmic reticulum. May be required for maturation and transport of active lipoprotein lipase (LPL) through the secretory pathway. This is Lipase maturation factor 2 (Lmf2) from Rattus norvegicus (Rat).